Reading from the N-terminus, the 277-residue chain is Carbonyl reductase [NADPH] 1 (277 aa).

The residue at position 2 (S2) is an N-acetylserine. Residues S2 and S30 each carry the phosphoserine modification. Residues 10-34 (VTGA…GDVV), 63-64 (DI), and N90 contribute to the NADP(+) site. Glutathione contacts are provided by residues 95-97 (FKT) and Q106. Residue S140 coordinates substrate. Glutathione is bound at residue 193-194 (AY). Y194 serves as the catalytic Proton acceptor. NADP(+)-binding positions include 194-198 (YGVTK) and 231-233 (VRT). The residue at position 239 (K239) is an N6-1-carboxyethyl lysine.

It belongs to the short-chain dehydrogenases/reductases (SDR) family. As to quaternary structure, monomer.

Its subcellular location is the cytoplasm. The catalysed reaction is a secondary alcohol + NADP(+) = a ketone + NADPH + H(+). It carries out the reaction prostaglandin F2alpha + NADP(+) = prostaglandin E2 + NADPH + H(+). It catalyses the reaction prostaglandin E1 + NADP(+) = 15-oxoprostaglandin E1 + NADPH + H(+). The enzyme catalyses menadione + NADPH + H(+) = menadiol + NADP(+). The catalysed reaction is prostaglandin D2 + NADP(+) = 15-oxoprostaglandin D2 + NADPH + H(+). It carries out the reaction prostaglandin E2 + NADP(+) = 15-oxoprostaglandin E2 + NADPH + H(+). It catalyses the reaction prostaglandin F2alpha + NADP(+) = 15-oxoprostaglandin F2alpha + NADPH + H(+). The enzyme catalyses daunorubicin + NADPH + H(+) = 13-dihydrodaunorubicin + NADP(+). The catalysed reaction is S-nitrosoglutathione + NADPH + H(+) = S-(hydroxysulfenamide)glutathione + NADP(+). It carries out the reaction a primary alcohol + NADP(+) = an aldehyde + NADPH + H(+). It catalyses the reaction cortisol + NADPH + H(+) = 20beta-dihydrocortisol + NADP(+). The enzyme catalyses corticosterone + NADPH + H(+) = 20beta-dihydrocorticosterone + NADP(+). Its function is as follows. NADPH-dependent reductase with broad substrate specificity. Catalyzes the reduction of a wide variety of carbonyl compounds including quinones, prostaglandins, menadione, plus various xenobiotics. Catalyzes the reduction of the antitumor anthracyclines doxorubicin and daunorubicin to the cardiotoxic compounds doxorubicinol and daunorubicinol. Can convert prostaglandin E to prostaglandin F2-alpha. Can bind glutathione, which explains its higher affinity for glutathione-conjugated substrates. Catalyzes the reduction of S-nitrosoglutathione. In addition, participates in the glucocorticoid metabolism by catalyzing the NADPH-dependent cortisol/corticosterone into 20beta-dihydrocortisol (20b-DHF) or 20beta-corticosterone (20b-DHB), which are weak agonists of NR3C1 and NR3C2 in adipose tissue. The chain is Carbonyl reductase [NADPH] 1 from Bos taurus (Bovine).